Here is a 217-residue protein sequence, read N- to C-terminus: Large ribosomal subunit protein bL21m (217 aa).

The span at 61–81 (PPKVTTATTPEAPAAVPTSTP) shows a compositional bias: low complexity. A disordered region spans residues 61-87 (PPKVTTATTPEAPAAVPTSTPFSQQPP).

The protein belongs to the bacterial ribosomal protein bL21 family. In terms of assembly, component of the mitochondrial large ribosomal subunit (mt-LSU). Mature N.crassa 74S mitochondrial ribosomes consist of a small (37S) and a large (54S) subunit. The 37S small subunit contains a 16S ribosomal RNA (16S mt-rRNA) and 32 different proteins. The 54S large subunit contains a 23S rRNA (23S mt-rRNA) and 42 different proteins.

It is found in the mitochondrion. In terms of biological role, component of the mitochondrial ribosome (mitoribosome), a dedicated translation machinery responsible for the synthesis of mitochondrial genome-encoded proteins, including at least some of the essential transmembrane subunits of the mitochondrial respiratory chain. The mitoribosomes are attached to the mitochondrial inner membrane and translation products are cotranslationally integrated into the membrane. This is Large ribosomal subunit protein bL21m (mrpl49) from Neurospora crassa (strain ATCC 24698 / 74-OR23-1A / CBS 708.71 / DSM 1257 / FGSC 987).